The following is a 938-amino-acid chain: MIDYKNTLNLPETGFPMRGDLAKREPDMLKNWYDKNLYQKVRESSKGKKSFILHDGPPYANGNIHIGHAVNKILKDIIMKSKTALGFDTPYVPGWDCHGLPIELKVEGIVGKPNEKISAAEFRQACRDYAKEQVEGQKADFIRMGILGDWDNPYLTMNFDTEAHIIRTLGKVIANGHLYKGSKPVHWCLDCGSSLAEAEVEYEDKVSPSIYVRFKAIDSAAVEAKFNAVGKGSGQISAVIWTTTPWTLPSNKAISINPEFDYQLVQFGDERVVLVKDLVESVQKAVGVESVEVLGEVKGDALELMQFQHPFYDYSVPLILGDHVTTDGGTGLVHTAPDHGQDDFVVSKKYNIEMAGLVANDGKFISSTPFFAGLGVFESNEKVLEKLKEVGALLKLERIKHSYPHCWRHKTPIIFRATPQWFIGMETQGLREQALGEIKSVRWIPSWGEARIDTMVANRPDWCISRQRTWGVPMTMFVHNETEELHPRTLEILESVAKRVEEKGIQAWWDLDPVEVLGEEDAKNYRKVPDTLDVWFDSGSTYASVVEARPEFNGNSTDMYLEGSDQHRGWFMSSLMLSTATNGKAPYKQVLTHGFVVDEKGRKMSKSLGNVIVPSEVWNKNGADILRLWVASTDYTGEIAVSHNILNSAGESYRRIRNTARFLLANLNGFDPKRDLVKPEEMIALDRWAVSCALEAQNDIKEAYDNYQFHTVVQRLMRFCSIEMGSFYLDIIKDRQYTTKADSLARRSCQTALWHIAEALVRWMAPILSFTADEIWSYLPQVEGRSEFVFTEEFYEGLFGLTEADKLDDAYWQQILKVRAESNRVLEQARKDKVIGSGLEAKVTLYANNEIRAMLEQLGNELRFVLITSQAIIKPLSEADVAEGEMAGLAVKVERAEGEKCPRCWHFATDIGTHTEHSSVCGRCVENVAGEGEKRSFA.

Residues 58-68 (PYANGNIHIGH) carry the 'HIGH' region motif. E562 serves as a coordination point for L-isoleucyl-5'-AMP. The 'KMSKS' region motif lies at 603–607 (KMSKS). K606 is an ATP binding site. 4 residues coordinate Zn(2+): C901, C904, C921, and C924.

This sequence belongs to the class-I aminoacyl-tRNA synthetase family. IleS type 1 subfamily. In terms of assembly, monomer. Requires Zn(2+) as cofactor.

The protein resides in the cytoplasm. It carries out the reaction tRNA(Ile) + L-isoleucine + ATP = L-isoleucyl-tRNA(Ile) + AMP + diphosphate. Functionally, catalyzes the attachment of isoleucine to tRNA(Ile). As IleRS can inadvertently accommodate and process structurally similar amino acids such as valine, to avoid such errors it has two additional distinct tRNA(Ile)-dependent editing activities. One activity is designated as 'pretransfer' editing and involves the hydrolysis of activated Val-AMP. The other activity is designated 'posttransfer' editing and involves deacylation of mischarged Val-tRNA(Ile). The polypeptide is Isoleucine--tRNA ligase (Actinobacillus pleuropneumoniae serotype 5b (strain L20)).